The following is a 237-amino-acid chain: Ribonuclease 3 (237 aa).

The region spanning 4–133 (LTELEKSLGV…VLAAIYLDKG (130 aa)) is the RNase III domain. Position 46 (E46) interacts with Mg(2+). Active-site residues include D50 and E122. E122 lines the Mg(2+) pocket. Residues 160 to 229 (DYKSRLQELV…AKEALQQFEN (70 aa)) enclose the DRBM domain.

It belongs to the ribonuclease III family. Homodimer. Mg(2+) serves as cofactor.

The protein localises to the cytoplasm. The enzyme catalyses Endonucleolytic cleavage to 5'-phosphomonoester.. Its function is as follows. Digests double-stranded RNA. Involved in the processing of primary rRNA transcript to yield the immediate precursors to the large and small rRNAs (23S and 16S). Processes some mRNAs, and tRNAs when they are encoded in the rRNA operon. Processes pre-crRNA and tracrRNA of type II CRISPR loci if present in the organism. This is Ribonuclease 3 from Dehalococcoides mccartyi (strain ATCC BAA-2266 / KCTC 15142 / 195) (Dehalococcoides ethenogenes (strain 195)).